The chain runs to 138 residues: Large ribosomal subunit protein uL16 (138 aa).

The segment covering 1–17 (MLIPRKVKHRKQHHPRQ) has biased composition (basic residues). Residues 1 to 24 (MLIPRKVKHRKQHHPRQRGIASGG) are disordered.

Belongs to the universal ribosomal protein uL16 family. Part of the 50S ribosomal subunit.

Functionally, binds 23S rRNA and is also seen to make contacts with the A and possibly P site tRNAs. The chain is Large ribosomal subunit protein uL16 from Mycolicibacterium gilvum (strain PYR-GCK) (Mycobacterium gilvum (strain PYR-GCK)).